The primary structure comprises 228 residues: L-ribulose-5-phosphate 4-epimerase UlaF (228 aa).

Residues 26–27 (GN), 43–44 (SG), and 72–73 (SS) each bind substrate. Positions 74, 93, and 95 each coordinate Zn(2+). The Proton donor/acceptor role is filled by Asp-118. Zn(2+) is bound at residue His-167. Tyr-225 serves as the catalytic Proton donor/acceptor.

It belongs to the aldolase class II family. AraD/FucA subfamily. It depends on Zn(2+) as a cofactor.

The enzyme catalyses L-ribulose 5-phosphate = D-xylulose 5-phosphate. It participates in cofactor degradation; L-ascorbate degradation; D-xylulose 5-phosphate from L-ascorbate: step 4/4. In terms of biological role, catalyzes the isomerization of L-ribulose 5-phosphate to D-xylulose 5-phosphate. Is involved in the anaerobic L-ascorbate utilization. This chain is L-ribulose-5-phosphate 4-epimerase UlaF, found in Shigella flexneri.